We begin with the raw amino-acid sequence, 187 residues long: Putative protein SSX8 (187 aa).

Disordered stretches follow at residues 1–21 (MNGDDAFAKRPRDDDKASEKR) and 109–187 (PKIM…EDDE). Positions 20-83 (KRSKAFNDIA…KQATDFQGNY (64 aa)) constitute a KRAB-related domain. Phosphoserine is present on serine 123. Residues 152–168 (KRSGPKRGRHAWTHRLR) show a composition bias toward basic residues.

This sequence belongs to the SSX family. As to expression, not detected in any normal or tumor tissues.

In terms of biological role, could act as a modulator of transcription. The protein is Putative protein SSX8 of Homo sapiens (Human).